Here is a 398-residue protein sequence, read N- to C-terminus: Minor cardiolipin synthase ClsB (398 aa).

A helical transmembrane segment spans residues 3–23 (VFIVIMIIVVIFFALILLDIF). PLD phosphodiesterase domains follow at residues 141–168 (MQKR…AEEY) and 311–338 (YQGF…DKRS).

The protein belongs to the phospholipase D family. Cardiolipin synthase subfamily.

It localises to the cell membrane. Functionally, involved in the biosynthesis of cardiolipin. The polypeptide is Minor cardiolipin synthase ClsB (clsB) (Bacillus subtilis (strain 168)).